Reading from the N-terminus, the 154-residue chain is MECPNCHKNASRVIDSRPSDENRAIRRRRECENCGFRFTTFERVERSPLLVVKNDGTREAFNRDKILHGVMMAAQKRPISSEQLDALVDHVENEIRKQGLNEISSKDIGNLVMKELANLDDVAYIRFASIYRQFKDVSGFMEAMEDMMAKHDKE.

Positions 1–22 are disordered; it reads MECPNCHKNASRVIDSRPSDEN. A zinc finger spans residues 3 to 34; it reads CPNCHKNASRVIDSRPSDENRAIRRRRECENC. The ATP-cone domain maps to 49–139; it reads LLVVKNDGTR…IYRQFKDVSG (91 aa).

It belongs to the NrdR family. The cofactor is Zn(2+).

Its function is as follows. Negatively regulates transcription of bacterial ribonucleotide reductase nrd genes and operons by binding to NrdR-boxes. This is Transcriptional repressor NrdR from Lactobacillus johnsonii (strain CNCM I-12250 / La1 / NCC 533).